Reading from the N-terminus, the 947-residue chain is Translation initiation factor IF-2 (947 aa).

A disordered region spans residues 61–284; sequence IQANQPAKNP…TAKNNKSHKI (224 aa). Residues 151–169 show a composition bias toward basic and acidic residues; that stretch reads QIEKAKQKLQEIQKSREAL. Residues 175-188 are compositionally biased toward low complexity; sequence SNANNANSTNNANN. The segment covering 189 to 206 has biased composition (basic and acidic residues); it reads AKKEISEVKKQEQEIKRH. Residues 207 to 218 show a composition bias toward basic residues; the sequence is ENIKRRTGFRVI. Residues 247-262 show a composition bias toward basic and acidic residues; it reads EDIKKEWQEKDKQEAK. The region spanning 446–615 is the tr-type G domain; the sequence is ERPPVVTIMG…LIQADIMELK (170 aa). Residues 455–462 are G1; sequence GHVDHGKT. Position 455–462 (455–462) interacts with GTP; the sequence is GHVDHGKT. Residues 480-484 are G2; sequence GITQH. A G3 region spans residues 501-504; the sequence is DTPG. Residues 501–505 and 555–558 each bind GTP; these read DTPGH and NKMD. The G4 stretch occupies residues 555–558; it reads NKMD. Residues 591–593 form a G5 region; the sequence is SAK.

Belongs to the TRAFAC class translation factor GTPase superfamily. Classic translation factor GTPase family. IF-2 subfamily.

It is found in the cytoplasm. One of the essential components for the initiation of protein synthesis. Protects formylmethionyl-tRNA from spontaneous hydrolysis and promotes its binding to the 30S ribosomal subunits. Also involved in the hydrolysis of GTP during the formation of the 70S ribosomal complex. This is Translation initiation factor IF-2 from Helicobacter pylori (strain P12).